We begin with the raw amino-acid sequence, 293 residues long: MTVGSGHRWPEPSMHPTEIAYAKINLALHVRRRRADGYHDIETIFAFAEHGDIVAAEPGPARLMLAGPFAPALAGEDPEDNLVMRAADGLCALAGEAARPAIRLDKRLPVAAGIGGGSADAAAVLRLLGRAYGIAADDPRVMTLAATLGADVPACVRSATVRGGERGDRLESIAADGLHGLPLLLVNPRVALPTGPVFAAWDRVDRGPLAPGDPLAAALAGRNDLEAPATLLHPVIGEVVTLLAAQPGAILARMSGSGATCFALFGSEADRDAADRALAHRRPDWWRLTSRLR.

The active site involves lysine 23. Residue 109–119 participates in ATP binding; that stretch reads PVAAGIGGGSA. Residue aspartate 151 is part of the active site.

It belongs to the GHMP kinase family. IspE subfamily.

It catalyses the reaction 4-CDP-2-C-methyl-D-erythritol + ATP = 4-CDP-2-C-methyl-D-erythritol 2-phosphate + ADP + H(+). It functions in the pathway isoprenoid biosynthesis; isopentenyl diphosphate biosynthesis via DXP pathway; isopentenyl diphosphate from 1-deoxy-D-xylulose 5-phosphate: step 3/6. Functionally, catalyzes the phosphorylation of the position 2 hydroxy group of 4-diphosphocytidyl-2C-methyl-D-erythritol. In Rhizorhabdus wittichii (strain DSM 6014 / CCUG 31198 / JCM 15750 / NBRC 105917 / EY 4224 / RW1) (Sphingomonas wittichii), this protein is 4-diphosphocytidyl-2-C-methyl-D-erythritol kinase.